We begin with the raw amino-acid sequence, 388 residues long: Chaperone protein DnaJ (388 aa).

The region spanning 5-70 is the J domain; it reads DYYTTLNISN…KKRNLYDQYG (66 aa). Residues 135–213 form a CR-type zinc finger; the sequence is GIKKEIRIPK…CFGQGRIKKS (79 aa). Cys148, Cys151, Cys165, Cys168, Cys187, Cys190, Cys201, and Cys204 together coordinate Zn(2+). CXXCXGXG motif repeat units follow at residues 148-155, 165-172, 187-194, and 201-208; these read CQSCYGYG, CTSCNGHG, CSTCRGTG, and CKICFGQG.

This sequence belongs to the DnaJ family. Homodimer. It depends on Zn(2+) as a cofactor.

It localises to the cytoplasm. In terms of biological role, participates actively in the response to hyperosmotic and heat shock by preventing the aggregation of stress-denatured proteins and by disaggregating proteins, also in an autonomous, DnaK-independent fashion. Unfolded proteins bind initially to DnaJ; upon interaction with the DnaJ-bound protein, DnaK hydrolyzes its bound ATP, resulting in the formation of a stable complex. GrpE releases ADP from DnaK; ATP binding to DnaK triggers the release of the substrate protein, thus completing the reaction cycle. Several rounds of ATP-dependent interactions between DnaJ, DnaK and GrpE are required for fully efficient folding. Also involved, together with DnaK and GrpE, in the DNA replication of plasmids through activation of initiation proteins. This chain is Chaperone protein DnaJ, found in Buchnera aphidicola subsp. Cinara cedri (strain Cc).